The chain runs to 865 residues: Protein translocase subunit SecA (865 aa).

Residues Gln-85, 103-107, and Asp-505 contribute to the ATP site; that span reads GEGKT. Residues Cys-847, Cys-849, Cys-858, and His-859 each coordinate Zn(2+).

It belongs to the SecA family. Monomer and homodimer. Part of the essential Sec protein translocation apparatus which comprises SecA, SecYEG and auxiliary proteins SecDF. Other proteins may also be involved. Zn(2+) is required as a cofactor.

The protein localises to the cell membrane. Its subcellular location is the cytoplasm. It carries out the reaction ATP + H2O + cellular proteinSide 1 = ADP + phosphate + cellular proteinSide 2.. Part of the Sec protein translocase complex. Interacts with the SecYEG preprotein conducting channel. Has a central role in coupling the hydrolysis of ATP to the transfer of proteins into and across the cell membrane, serving as an ATP-driven molecular motor driving the stepwise translocation of polypeptide chains across the membrane. This Lactococcus lactis subsp. cremoris (strain SK11) protein is Protein translocase subunit SecA.